The primary structure comprises 394 residues: Xylose isomerase (394 aa).

Catalysis depends on residues histidine 54 and aspartate 57. Mg(2+)-binding residues include glutamate 181, glutamate 217, histidine 220, aspartate 245, aspartate 255, aspartate 257, and aspartate 292.

The protein belongs to the xylose isomerase family. As to quaternary structure, homotetramer. It depends on Mg(2+) as a cofactor.

It localises to the cytoplasm. It catalyses the reaction alpha-D-xylose = alpha-D-xylulofuranose. This chain is Xylose isomerase (xylA), found in Actinoplanes missouriensis (strain ATCC 14538 / DSM 43046 / CBS 188.64 / JCM 3121 / NBRC 102363 / NCIMB 12654 / NRRL B-3342 / UNCC 431).